The chain runs to 76 residues: UPF0154 protein LCA_1273 (76 aa).

The chain crosses the membrane as a helical span at residues 3 to 23 (IGIGVLIFVIGALLGAVAGFF). Residues 55–76 (PSEKKLNQMMSSMKAQQKRSKK) are disordered.

The protein belongs to the UPF0154 family.

Its subcellular location is the cell membrane. This Latilactobacillus sakei subsp. sakei (strain 23K) (Lactobacillus sakei subsp. sakei) protein is UPF0154 protein LCA_1273.